The sequence spans 317 residues: Putative ribosomal protein uL10-like (317 aa).

At tyrosine 24 the chain carries Phosphotyrosine. At threonine 59 the chain carries Phosphothreonine. Residues 292-317 (AAAPAKVEAKEESEESDEDMGFGLFD) form a disordered region. Lysine 297 is covalently cross-linked (Glycyl lysine isopeptide (Lys-Gly) (interchain with G-Cter in SUMO1); alternate). A Glycyl lysine isopeptide (Lys-Gly) (interchain with G-Cter in SUMO2); alternate cross-link involves residue lysine 297. Acidic residues predominate over residues 302–311 (EESEESDEDM). Serine 304 and serine 307 each carry phosphoserine.

It belongs to the universal ribosomal protein uL10 family. In terms of assembly, P0 forms a pentameric complex by interaction with dimers of P1 and P2.

Its function is as follows. Ribosomal protein P0 is the functional equivalent of E.coli protein L10. This is Putative ribosomal protein uL10-like (RPLP0P6) from Homo sapiens (Human).